The primary structure comprises 198 residues: Recombination protein RecR (198 aa).

The C4-type zinc finger occupies 57-72 (CSVCGHITENDPCYIC). A Toprim domain is found at 80-175 (SVICVVEDDK…KVTRLAQGLS (96 aa)).

This sequence belongs to the RecR family.

Functionally, may play a role in DNA repair. It seems to be involved in an RecBC-independent recombinational process of DNA repair. It may act with RecF and RecO. The sequence is that of Recombination protein RecR from Staphylococcus aureus (strain MSSA476).